A 56-amino-acid chain; its full sequence is Photosystem II assembly protein Psb34 (56 aa).

At 1–33 (MRYTTDEGGRLNNFAIEPKVYQAQPWTPQQKVR) the chain is on the cytoplasmic side. Residues 34 to 54 (AALLVGGGLLLVAGLVAIAVG) form a helical membrane-spanning segment. Topologically, residues 55-56 (VS) are extracellular.

In terms of assembly, part of photosystem II (PSII) assembly intermediate complex PSII-I; crystallized from a strain without psbJ, it forms monomeric PSII before addition of the oxygen evolving complex. PSII-I includes 3 assembly factors not found in mature PSII (Psb27, Psb28 and Psb34). The N-terminus of Psb34 (this protein) binds to CP47 (psbB) in close proximity to PsbH on the cytoplasmic face of PSII.

The protein localises to the cellular thylakoid membrane. Involved in photosystem II (PSII) assembly and/or repair, probably in conversion of late PSII assembly intermediates into mature dimeric PSII. The sequence is that of Photosystem II assembly protein Psb34 from Thermosynechococcus vestitus (strain NIES-2133 / IAM M-273 / BP-1).